The primary structure comprises 471 residues: 3-isopropylmalate dehydratase large subunit (471 aa).

3 residues coordinate [4Fe-4S] cluster: Cys347, Cys407, and Cys410.

This sequence belongs to the aconitase/IPM isomerase family. LeuC type 1 subfamily. Heterodimer of LeuC and LeuD. [4Fe-4S] cluster serves as cofactor.

It catalyses the reaction (2R,3S)-3-isopropylmalate = (2S)-2-isopropylmalate. Its pathway is amino-acid biosynthesis; L-leucine biosynthesis; L-leucine from 3-methyl-2-oxobutanoate: step 2/4. In terms of biological role, catalyzes the isomerization between 2-isopropylmalate and 3-isopropylmalate, via the formation of 2-isopropylmaleate. This Acaryochloris marina (strain MBIC 11017) protein is 3-isopropylmalate dehydratase large subunit.